Reading from the N-terminus, the 493-residue chain is Glutamyl-tRNA(Gln) amidotransferase subunit A (493 aa).

Active-site charge relay system residues include K78 and S158. S182 (acyl-ester intermediate) is an active-site residue.

Belongs to the amidase family. GatA subfamily. Heterotrimer of A, B and C subunits.

The enzyme catalyses L-glutamyl-tRNA(Gln) + L-glutamine + ATP + H2O = L-glutaminyl-tRNA(Gln) + L-glutamate + ADP + phosphate + H(+). Allows the formation of correctly charged Gln-tRNA(Gln) through the transamidation of misacylated Glu-tRNA(Gln) in organisms which lack glutaminyl-tRNA synthetase. The reaction takes place in the presence of glutamine and ATP through an activated gamma-phospho-Glu-tRNA(Gln). The chain is Glutamyl-tRNA(Gln) amidotransferase subunit A from Azorhizobium caulinodans (strain ATCC 43989 / DSM 5975 / JCM 20966 / LMG 6465 / NBRC 14845 / NCIMB 13405 / ORS 571).